The chain runs to 417 residues: Serine hydroxymethyltransferase (417 aa).

(6S)-5,6,7,8-tetrahydrofolate contacts are provided by residues Leu121 and 125–127; that span reads GHL. Position 229 is an N6-(pyridoxal phosphate)lysine (Lys229). Position 355–357 (355–357) interacts with (6S)-5,6,7,8-tetrahydrofolate; that stretch reads SPF.

Belongs to the SHMT family. As to quaternary structure, homodimer. Pyridoxal 5'-phosphate is required as a cofactor.

The protein resides in the cytoplasm. The catalysed reaction is (6R)-5,10-methylene-5,6,7,8-tetrahydrofolate + glycine + H2O = (6S)-5,6,7,8-tetrahydrofolate + L-serine. It functions in the pathway one-carbon metabolism; tetrahydrofolate interconversion. It participates in amino-acid biosynthesis; glycine biosynthesis; glycine from L-serine: step 1/1. In terms of biological role, catalyzes the reversible interconversion of serine and glycine with tetrahydrofolate (THF) serving as the one-carbon carrier. This reaction serves as the major source of one-carbon groups required for the biosynthesis of purines, thymidylate, methionine, and other important biomolecules. Also exhibits THF-independent aldolase activity toward beta-hydroxyamino acids, producing glycine and aldehydes, via a retro-aldol mechanism. This chain is Serine hydroxymethyltransferase, found in Xylella fastidiosa (strain M23).